A 333-amino-acid polypeptide reads, in one-letter code: Phosphate acyltransferase (333 aa).

Belongs to the PlsX family. Homodimer. Probably interacts with PlsY.

It localises to the cytoplasm. It catalyses the reaction a fatty acyl-[ACP] + phosphate = an acyl phosphate + holo-[ACP]. The protein operates within lipid metabolism; phospholipid metabolism. Catalyzes the reversible formation of acyl-phosphate (acyl-PO(4)) from acyl-[acyl-carrier-protein] (acyl-ACP). This enzyme utilizes acyl-ACP as fatty acyl donor, but not acyl-CoA. This Clostridium beijerinckii (strain ATCC 51743 / NCIMB 8052) (Clostridium acetobutylicum) protein is Phosphate acyltransferase.